A 292-amino-acid polypeptide reads, in one-letter code: MRLVKTVAELRDAIAAFRRAGKTIGFVPTMGFLHIGHLTLVARAKAENDATVVSIFVNPLQFGANEDLARYPRDLARDSALLQEAGVDILFAPDVTEMYPRPIQTVVDVPELGSQLEGAVRPGHFAGVTTVVTKLFNLVQPDAAYFGEKDYQQVTLVRRMVEDLAQPVRVIPVATVREADGLACSSRNVYLSPEQRAAAVIVPHALDEAERLYAEGVDDPAAIEAAIEKFIAAEPLASPEVVAVRDPDTLAPVASLQAGPVLVALFVRFGSTRLLDNRVIGREKTAEQEAAQ.

30-37 (MGFLHIGH) provides a ligand contact to ATP. The active-site Proton donor is His37. Residue Gln61 coordinates (R)-pantoate. Gln61 contributes to the beta-alanine binding site. 147-150 (GEKD) provides a ligand contact to ATP. Gln153 is a binding site for (R)-pantoate. ATP is bound by residues Val176 and 184–187 (CSSR).

Belongs to the pantothenate synthetase family. Homodimer.

It localises to the cytoplasm. The enzyme catalyses (R)-pantoate + beta-alanine + ATP = (R)-pantothenate + AMP + diphosphate + H(+). Its pathway is cofactor biosynthesis; (R)-pantothenate biosynthesis; (R)-pantothenate from (R)-pantoate and beta-alanine: step 1/1. Its function is as follows. Catalyzes the condensation of pantoate with beta-alanine in an ATP-dependent reaction via a pantoyl-adenylate intermediate. The polypeptide is Pantothenate synthetase (Agrobacterium fabrum (strain C58 / ATCC 33970) (Agrobacterium tumefaciens (strain C58))).